The chain runs to 329 residues: Ribonucleoside-diphosphate reductase small chain (329 aa).

Fe cation-binding residues include D75, E106, and H109. Y113 is a catalytic residue. Positions 168, 202, and 205 each coordinate Fe cation.

This sequence belongs to the ribonucleoside diphosphate reductase small chain family. Heterodimer of a large and a small chain. It depends on Fe cation as a cofactor.

The protein localises to the cytoplasm. The enzyme catalyses a 2'-deoxyribonucleoside 5'-diphosphate + [thioredoxin]-disulfide + H2O = a ribonucleoside 5'-diphosphate + [thioredoxin]-dithiol. In terms of biological role, provides the precursors necessary for DNA synthesis. Catalyzes the biosynthesis of deoxyribonucleotides from the corresponding ribonucleotides. This Nicotiana tabacum (Common tobacco) protein is Ribonucleoside-diphosphate reductase small chain.